A 248-amino-acid chain; its full sequence is Phycocyanobilin:ferredoxin oxidoreductase (248 aa).

The protein belongs to the HY2 family.

The catalysed reaction is (2R,3Z)-phycocyanobilin + 4 oxidized [2Fe-2S]-[ferredoxin] = biliverdin IXalpha + 4 reduced [2Fe-2S]-[ferredoxin] + 4 H(+). Functionally, catalyzes the four-electron reduction of biliverdin IX-alpha (2-electron reduction at both the A and D rings); the reaction proceeds via an isolatable 2-electron intermediate, 181,182-dihydrobiliverdin. The protein is Phycocyanobilin:ferredoxin oxidoreductase (pcyA) of Synechocystis sp. (strain ATCC 27184 / PCC 6803 / Kazusa).